A 382-amino-acid chain; its full sequence is MAP kinase-activated protein kinase 3 (382 aa).

Residue Met1 is modified to N-acetylmethionine. Residues 1–34 (MDGETAEEQGGPVPPPVAPGGPGLGGAPGGRREP) form a disordered region. Gly residues predominate over residues 20-29 (GGPGLGGAPG). A Protein kinase domain is found at 44–304 (QLSKQVLGLG…ITQFMNHPWI (261 aa)). ATP contacts are provided by residues 50 to 58 (LGLGVNGKV) and Lys73. Asp166 serves as the catalytic Proton acceptor. Phosphothreonine; by MAPK14 is present on Thr201. Position 251 is a phosphoserine; by MAPK14 (Ser251). Phosphoserine; by autocatalysis is present on Ser307. The segment at 307–343 (SMVVPQTPLHTARVLQEDKDHWDEVKEEMTSALATMR) is autoinhibitory helix. Thr313 bears the Phosphothreonine; by MAPK14 mark. A Nuclear export signal (NES) motif is present at residues 335–344 (MTSALATMRV). The segment at 345–369 (DYDQVKIKDLKTSNNRLLNKRRKKQ) is p38 MAPK-binding site. 2 short sequence motifs (bipartite nuclear localization signal) span residues 350-353 (KIKD) and 364-368 (KRRKK). Positions 357-382 (SNNRLLNKRRKKQAGSSSASQGCNNQ) are disordered. The span at 370-382 (AGSSSASQGCNNQ) shows a compositional bias: polar residues.

This sequence belongs to the protein kinase superfamily. CAMK Ser/Thr protein kinase family. Heterodimer with p38-alpha/MAPK14. The heterodimer with p38-alpha/MAPK14 forms a stable complex: molecules are positioned 'face to face' so that the ATP-binding sites of both kinases are at the heterodimer interface. Interacts with TCF3 and with polycomb proteins, such as PCH2 and BMI1/PCGF4. Phosphorylated and activated by MAPK1/ERK2 and MAPK3/ERK1. Phosphorylated and activated by MAP kinase p38-alpha/MAPK14 at Thr-201, Ser-251 and Thr-313. In terms of tissue distribution, widely expressed, with a higher expression level observed in heart and skeletal muscle. No expression in brain. Expressed in the retinal pigment epithelium.

It localises to the nucleus. Its subcellular location is the cytoplasm. It carries out the reaction L-seryl-[protein] + ATP = O-phospho-L-seryl-[protein] + ADP + H(+). The catalysed reaction is L-threonyl-[protein] + ATP = O-phospho-L-threonyl-[protein] + ADP + H(+). Activated following phosphorylation by p38-alpha/MAPK14 following various stresses. Inhibited by ligand 5B (2'-[2-(1,3-benzodioxol-5-yl)pyrimidin-4-yl]-5',6'-dihydrospiro[piperidine-4,7'-pyrrolo[3,2-c]pyridin]- 4'(1'h)-one) and ligand P4O (2-[2-(2-fluorophenyl)pyridin-4-yl]-1,5,6,7-tetrahydro- 4h-pyrrolo[3,2-c]pyridin-4-one), 2 ATP-competitive inhibitors. Stress-activated serine/threonine-protein kinase involved in cytokines production, endocytosis, cell migration, chromatin remodeling and transcriptional regulation. Following stress, it is phosphorylated and activated by MAP kinase p38-alpha/MAPK14, leading to phosphorylation of substrates. Phosphorylates serine in the peptide sequence, Hyd-X-R-X(2)-S, where Hyd is a large hydrophobic residue. MAPKAPK2 and MAPKAPK3, share the same function and substrate specificity, but MAPKAPK3 kinase activity and level in protein expression are lower compared to MAPKAPK2. Phosphorylates HSP27/HSPB1, KRT18, KRT20, RCSD1, RPS6KA3, TAB3 and TTP/ZFP36. Mediates phosphorylation of HSP27/HSPB1 in response to stress, leading to dissociate HSP27/HSPB1 from large small heat-shock protein (sHsps) oligomers and impair their chaperone activities and ability to protect against oxidative stress effectively. Involved in inflammatory response by regulating tumor necrosis factor (TNF) and IL6 production post-transcriptionally: acts by phosphorylating AU-rich elements (AREs)-binding proteins, such as TTP/ZFP36, leading to regulate the stability and translation of TNF and IL6 mRNAs. Phosphorylation of TTP/ZFP36, a major post-transcriptional regulator of TNF, promotes its binding to 14-3-3 proteins and reduces its ARE mRNA affinity leading to inhibition of dependent degradation of ARE-containing transcript. Involved in toll-like receptor signaling pathway (TLR) in dendritic cells: required for acute TLR-induced macropinocytosis by phosphorylating and activating RPS6KA3. Also acts as a modulator of Polycomb-mediated repression. This is MAP kinase-activated protein kinase 3 (MAPKAPK3) from Homo sapiens (Human).